Consider the following 457-residue polypeptide: Protein translocase subunit SecY (457 aa).

A run of 10 helical transmembrane segments spans residues 17 to 37 (IFFT…PVPG), 75 to 95 (IALG…LVVF), 120 to 140 (LFTL…ALRM), 163 to 183 (VFYL…MWIG), 195 to 215 (ISLI…GSIF), 230 to 250 (IVSL…TVLI), 287 to 307 (VIPV…GQFL), 326 to 346 (VVYS…WTAT), 386 to 406 (LLGA…GRIL), and 412 to 432 (VSYF…LDTM).

It belongs to the SecY/SEC61-alpha family. As to quaternary structure, component of the Sec protein translocase complex. Heterotrimer consisting of SecY, SecE and SecG subunits. The heterotrimers can form oligomers, although 1 heterotrimer is thought to be able to translocate proteins. Interacts with the ribosome. Interacts with SecDF, and other proteins may be involved. Interacts with SecA.

Its subcellular location is the cell inner membrane. Functionally, the central subunit of the protein translocation channel SecYEG. Consists of two halves formed by TMs 1-5 and 6-10. These two domains form a lateral gate at the front which open onto the bilayer between TMs 2 and 7, and are clamped together by SecE at the back. The channel is closed by both a pore ring composed of hydrophobic SecY resides and a short helix (helix 2A) on the extracellular side of the membrane which forms a plug. The plug probably moves laterally to allow the channel to open. The ring and the pore may move independently. This is Protein translocase subunit SecY from Chlamydia muridarum (strain MoPn / Nigg).